Reading from the N-terminus, the 105-residue chain is uncharacterized protein (105 aa).

The chain crosses the membrane as a helical span at residues 64–84; it reads ILLISIFFLLLFALPQHTMGI.

It is found in the membrane. This is an uncharacterized protein from Saccharomyces cerevisiae (strain ATCC 204508 / S288c) (Baker's yeast).